We begin with the raw amino-acid sequence, 127 residues long: UPF0325 protein VIBHAR_03240 (127 aa).

The protein belongs to the UPF0325 family.

This Vibrio campbellii (strain ATCC BAA-1116) protein is UPF0325 protein VIBHAR_03240.